The chain runs to 158 residues: Crossover junction endodeoxyribonuclease RuvC (158 aa).

Active-site residues include aspartate 7, glutamate 66, and aspartate 139. Mg(2+) is bound by residues aspartate 7, glutamate 66, and aspartate 139.

Belongs to the RuvC family. In terms of assembly, homodimer which binds Holliday junction (HJ) DNA. The HJ becomes 2-fold symmetrical on binding to RuvC with unstacked arms; it has a different conformation from HJ DNA in complex with RuvA. In the full resolvosome a probable DNA-RuvA(4)-RuvB(12)-RuvC(2) complex forms which resolves the HJ. Mg(2+) serves as cofactor.

Its subcellular location is the cytoplasm. The catalysed reaction is Endonucleolytic cleavage at a junction such as a reciprocal single-stranded crossover between two homologous DNA duplexes (Holliday junction).. Its function is as follows. The RuvA-RuvB-RuvC complex processes Holliday junction (HJ) DNA during genetic recombination and DNA repair. Endonuclease that resolves HJ intermediates. Cleaves cruciform DNA by making single-stranded nicks across the HJ at symmetrical positions within the homologous arms, yielding a 5'-phosphate and a 3'-hydroxyl group; requires a central core of homology in the junction. The consensus cleavage sequence is 5'-(A/T)TT(C/G)-3'. Cleavage occurs on the 3'-side of the TT dinucleotide at the point of strand exchange. HJ branch migration catalyzed by RuvA-RuvB allows RuvC to scan DNA until it finds its consensus sequence, where it cleaves and resolves the cruciform DNA. The polypeptide is Crossover junction endodeoxyribonuclease RuvC (Campylobacter jejuni subsp. jejuni serotype O:6 (strain 81116 / NCTC 11828)).